Reading from the N-terminus, the 36-residue chain is Photosystem I reaction center subunit VIII (36 aa).

A helical transmembrane segment spans residues 8–28 (SVLVPLVGLVFPAIAMASLFL).

Belongs to the PsaI family.

It localises to the plastid. The protein localises to the chloroplast thylakoid membrane. In terms of biological role, may help in the organization of the PsaL subunit. The chain is Photosystem I reaction center subunit VIII from Helianthus annuus (Common sunflower).